The chain runs to 139 residues: MANAASGMAVHDDCKLRFLELKAKRTHRFIVYKIEEKQKQVVVEKVGQPIQTYEEFAACLPADECRYAIYDFDFVTAENCQKSKIFFIAWCPDIAKVRSKMIYASSKDRFKRELDGIQVELQATDPTEMDLDVFRSRAN.

The ADF-H domain occupies 5–139; that stretch reads ASGMAVHDDC…DLDVFRSRAN (135 aa). Position 6 is a phosphoserine; by CPK3 (serine 6).

The protein belongs to the actin-binding proteins ADF family. Interacts with the 14-3-3-like protein GRF6/AFT1. Phosphorylation at Ser-6 by CPK3/CDPK6 inhibits actin-depolimerizing activity. In terms of tissue distribution, expressed in vascular tissues of all organs.

Its subcellular location is the cytoplasm. It is found in the cytoskeleton. Functionally, actin-depolymerizing protein. Stimulates F-actin depolymerization. Involved in plant development, cell organ expansion and flowering by controlling breakdown of thick actin cables. Severs actin filaments or bundles and promotes actin cytoskeleton disassembly. Binds monomeric actin (G-actin) with a marked preference for the ADP-loaded form and inhibits the rate of nucleotide exchange on G-actin. This is Actin-depolymerizing factor 1 (ADF1) from Arabidopsis thaliana (Mouse-ear cress).